The chain runs to 413 residues: Serine/threonine transporter SstT (413 aa).

9 helical membrane-spanning segments follow: residues G14 to S34, L44 to V64, I82 to F102, A141 to L161, G178 to V198, L217 to F237, I290 to L310, L330 to I350, and L356 to V376.

The protein belongs to the dicarboxylate/amino acid:cation symporter (DAACS) (TC 2.A.23) family.

It is found in the cell inner membrane. It catalyses the reaction L-serine(in) + Na(+)(in) = L-serine(out) + Na(+)(out). The enzyme catalyses L-threonine(in) + Na(+)(in) = L-threonine(out) + Na(+)(out). Its function is as follows. Involved in the import of serine and threonine into the cell, with the concomitant import of sodium (symport system). The chain is Serine/threonine transporter SstT from Edwardsiella ictaluri (strain 93-146).